A 338-amino-acid chain; its full sequence is Large ribosomal subunit protein uL3 (338 aa).

2 disordered regions span residues 230-256 and 315-338; these read HRKGHRRTGTIGPQAPALMFTQPRPGQ and PARPPRRAPPTTEPQVVWVSSQQP.

This sequence belongs to the universal ribosomal protein uL3 family. As to quaternary structure, part of the 50S ribosomal subunit. Forms a cluster with proteins L14 and L24e.

Functionally, one of the primary rRNA binding proteins, it binds directly near the 3'-end of the 23S rRNA, where it nucleates assembly of the 50S subunit. The polypeptide is Large ribosomal subunit protein uL3 (Pyrobaculum arsenaticum (strain DSM 13514 / JCM 11321 / PZ6)).